The primary structure comprises 313 residues: uncharacterized protein (313 aa).

The protein to M.jannaschii MJ0977 C-terminal region.

This is an uncharacterized protein from Methanocaldococcus jannaschii (strain ATCC 43067 / DSM 2661 / JAL-1 / JCM 10045 / NBRC 100440) (Methanococcus jannaschii).